Here is a 99-residue protein sequence, read N- to C-terminus: Cytochrome c2 iso-1 (99 aa).

Heme c contacts are provided by cysteine 10, cysteine 13, histidine 14, and methionine 75.

It belongs to the cytochrome c family. In terms of processing, binds 1 heme c group covalently per subunit.

Functionally, cytochrome c2 is found mainly in purple, non-sulfur, photosynthetic bacteria where it functions as the electron donor to the oxidized bacteriochlorophyll in the photophosphorylation pathway. However, it may also have a role in the respiratory chain and is found in some non-photosynthetic bacteria. The polypeptide is Cytochrome c2 iso-1 (Magnetospirillum fulvum (Rhodospirillum fulvum)).